The following is a 151-amino-acid chain: Deoxyuridine 5'-triphosphate nucleotidohydrolase (151 aa).

Substrate is bound by residues 70 to 72 (RSG), Asn-83, and 87 to 89 (VID).

The protein belongs to the dUTPase family. Mg(2+) is required as a cofactor.

The enzyme catalyses dUTP + H2O = dUMP + diphosphate + H(+). It participates in pyrimidine metabolism; dUMP biosynthesis; dUMP from dCTP (dUTP route): step 2/2. In terms of biological role, this enzyme is involved in nucleotide metabolism: it produces dUMP, the immediate precursor of thymidine nucleotides and it decreases the intracellular concentration of dUTP so that uracil cannot be incorporated into DNA. The polypeptide is Deoxyuridine 5'-triphosphate nucleotidohydrolase (Desulfitobacterium hafniense (strain DSM 10664 / DCB-2)).